We begin with the raw amino-acid sequence, 146 residues long: Large ribosomal subunit protein uL15 (146 aa).

The segment at 1–59 (MRLEELKAPAGANKRTKRVGRGTGSGHGKTSTRGHKGQKSRSGGGVRPGFEGGQMPLQR) is disordered. Basic residues predominate over residues 30–39 (TSTRGHKGQK). Positions 42–52 (SGGGVRPGFEG) are enriched in gly residues.

This sequence belongs to the universal ribosomal protein uL15 family. In terms of assembly, part of the 50S ribosomal subunit.

Its function is as follows. Binds to the 23S rRNA. The polypeptide is Large ribosomal subunit protein uL15 (Syntrophomonas wolfei subsp. wolfei (strain DSM 2245B / Goettingen)).